A 352-amino-acid chain; its full sequence is Putative histone-lysine N-methyltransferase ASHH4 (352 aa).

The AWS domain maps to 60–109 (DHGIFCSCSLDPGSSTLCGSDCNCGILLSSCSSSCKCSSECTNKPFQQRH). Residues 111 to 228 (KKMKLVQTEK…KGEQLTYDYQ (118 aa)) form the SET domain. The Post-SET domain maps to 234–250 (ADQDCYCGAVCCRKKLG).

This sequence belongs to the class V-like SAM-binding methyltransferase superfamily. Histone-lysine methyltransferase family. SET2 subfamily.

The protein localises to the nucleus. The protein resides in the chromosome. Its subcellular location is the centromere. The enzyme catalyses L-lysyl-[histone] + S-adenosyl-L-methionine = N(6)-methyl-L-lysyl-[histone] + S-adenosyl-L-homocysteine + H(+). Its function is as follows. Histone methyltransferase. The protein is Putative histone-lysine N-methyltransferase ASHH4 (ASHH4) of Arabidopsis thaliana (Mouse-ear cress).